The chain runs to 34 residues: Photosystem II reaction center protein M (34 aa).

Residues G7 to I27 form a helical membrane-spanning segment.

It belongs to the PsbM family. In terms of assembly, PSII is composed of 1 copy each of membrane proteins PsbA, PsbB, PsbC, PsbD, PsbE, PsbF, PsbH, PsbI, PsbJ, PsbK, PsbL, PsbM, PsbT, PsbX, PsbY, PsbZ, Psb30/Ycf12, peripheral proteins PsbO, CyanoQ (PsbQ), PsbU, PsbV and a large number of cofactors. It forms dimeric complexes.

The protein localises to the cellular thylakoid membrane. Its function is as follows. One of the components of the core complex of photosystem II (PSII). PSII is a light-driven water:plastoquinone oxidoreductase that uses light energy to abstract electrons from H(2)O, generating O(2) and a proton gradient subsequently used for ATP formation. It consists of a core antenna complex that captures photons, and an electron transfer chain that converts photonic excitation into a charge separation. This subunit is found at the monomer-monomer interface. This Parasynechococcus marenigrum (strain WH8102) protein is Photosystem II reaction center protein M.